A 199-amino-acid chain; its full sequence is Protein-methionine-sulfoxide reductase heme-binding subunit MsrQ (199 aa).

Transmembrane regions (helical) follow at residues 10–30, 82–102, 116–136, and 153–173; these read WLKV…FWAI, LWCF…ELGI, PYLT…LTST, and VVYL…KILS.

This sequence belongs to the MsrQ family. In terms of assembly, heterodimer of a catalytic subunit (MsrP) and a heme-binding subunit (MsrQ). The cofactor is FMN. Requires heme b as cofactor.

It localises to the cell inner membrane. In terms of biological role, part of the MsrPQ system that repairs oxidized periplasmic proteins containing methionine sulfoxide residues (Met-O), using respiratory chain electrons. Thus protects these proteins from oxidative-stress damage caused by reactive species of oxygen and chlorine generated by the host defense mechanisms. MsrPQ is essential for the maintenance of envelope integrity under bleach stress, rescuing a wide series of structurally unrelated periplasmic proteins from methionine oxidation, including the primary periplasmic chaperone SurA and the lipoprotein Pal. MsrQ provides electrons for reduction to the reductase catalytic subunit MsrP, using the quinone pool of the respiratory chain. This Salmonella dublin (strain CT_02021853) protein is Protein-methionine-sulfoxide reductase heme-binding subunit MsrQ.